The sequence spans 149 residues: Active regulator of SIRT1 (149 aa).

The disordered stretch occupies residues 1-64; sequence MSVSLLRKGL…GLRHDQKATA (64 aa). Positions 8-19 are enriched in basic and acidic residues; the sequence is KGLDLLREERSG. The segment covering 30-41 has biased composition (low complexity); the sequence is SSKPKPCLSSSK. The segment covering 43–52 has biased composition (basic residues); sequence GMRKQLRRLK.

The protein belongs to the AROS family. In terms of assembly, part of the small subunit (SSU) processome, composed of more than 70 proteins and the RNA chaperone small nucleolar RNA (snoRNA) U3.

The protein resides in the nucleus. Its subcellular location is the nucleolus. Its function is as follows. Part of the small subunit (SSU) processome, first precursor of the small eukaryotic ribosomal subunit. During the assembly of the SSU processome in the nucleolus, many ribosome biogenesis factors, an RNA chaperone and ribosomal proteins associate with the nascent pre-rRNA and work in concert to generate RNA folding, modifications, rearrangements and cleavage as well as targeted degradation of pre-ribosomal RNA by the RNA exosome. Acts as a chaperone that specifically mediates the integration of RPS19 in state post-A1. Direct regulator of SIRT1. The polypeptide is Active regulator of SIRT1 (rps19bp1) (Xenopus tropicalis (Western clawed frog)).